A 236-amino-acid chain; its full sequence is tRNA1(Val) (adenine(37)-N6)-methyltransferase (236 aa).

The protein belongs to the methyltransferase superfamily. tRNA (adenine-N(6)-)-methyltransferase family.

The protein localises to the cytoplasm. The catalysed reaction is adenosine(37) in tRNA1(Val) + S-adenosyl-L-methionine = N(6)-methyladenosine(37) in tRNA1(Val) + S-adenosyl-L-homocysteine + H(+). Its function is as follows. Specifically methylates the adenine in position 37 of tRNA(1)(Val) (anticodon cmo5UAC). The protein is tRNA1(Val) (adenine(37)-N6)-methyltransferase of Actinobacillus pleuropneumoniae serotype 5b (strain L20).